A 428-amino-acid chain; its full sequence is C4-dicarboxylate transport protein 1 (428 aa).

8 helical membrane passes run 5–27 (FYKI…GHFE), 42–64 (IQLI…IAGM), 77–99 (ALLY…GHIF), 150–167 (ILQI…LSAM), 188–210 (IVHV…TIGK), 225–247 (TFYL…LTGF), 314–336 (IFIS…LAVA), and 351–373 (FITL…VLIL).

The protein belongs to the dicarboxylate/amino acid:cation symporter (DAACS) (TC 2.A.23) family.

It is found in the cell inner membrane. Functionally, responsible for the transport of dicarboxylates such as succinate, fumarate, and malate from the periplasm across the membrane. In Ralstonia nicotianae (strain ATCC BAA-1114 / GMI1000) (Ralstonia solanacearum), this protein is C4-dicarboxylate transport protein 1 (dctA1).